A 490-amino-acid chain; its full sequence is Phosphoglucosamine mutase (490 aa).

The active-site Phosphoserine intermediate is serine 139. 4 residues coordinate Mg(2+): serine 139, aspartate 279, aspartate 281, and aspartate 283. Serine 139 is subject to Phosphoserine.

The protein belongs to the phosphohexose mutase family. It depends on Mg(2+) as a cofactor. Post-translationally, activated by phosphorylation.

The enzyme catalyses alpha-D-glucosamine 1-phosphate = D-glucosamine 6-phosphate. In terms of biological role, catalyzes the conversion of glucosamine-6-phosphate to glucosamine-1-phosphate. The sequence is that of Phosphoglucosamine mutase from Nostoc sp. (strain PCC 7120 / SAG 25.82 / UTEX 2576).